The chain runs to 336 residues: Aspartate--ammonia ligase (336 aa).

This sequence belongs to the class-II aminoacyl-tRNA synthetase family. AsnA subfamily.

The protein localises to the cytoplasm. It carries out the reaction L-aspartate + NH4(+) + ATP = L-asparagine + AMP + diphosphate + H(+). It functions in the pathway amino-acid biosynthesis; L-asparagine biosynthesis; L-asparagine from L-aspartate (ammonia route): step 1/1. The sequence is that of Aspartate--ammonia ligase from Clostridium perfringens (strain SM101 / Type A).